The sequence spans 944 residues: Thyroid peroxidase (944 aa).

The first 30 residues, 1–30 (MVGLVPAGSAWGGRALAVLGVTLLVALARG), serve as a signal peptide directing secretion. The Extracellular segment spans residues 31 to 858 (LLPFFLGGRD…SGRLPKASLV (828 aa)). An N-linked (GlcNAc...) asparagine glycan is attached at N141. C154 and C170 form a disulfide bridge. D250 is a heme b binding site. H251 functions as the Proton acceptor in the catalytic mechanism. D252 contacts Ca(2+). 2 disulfide bridges follow: C271/C281 and C275/C295. N316 carries N-linked (GlcNAc...) asparagine glycosylation. Ca(2+) contacts are provided by T330, F332, D334, and S336. N351 carries an N-linked (GlcNAc...) asparagine glycan. Heme b is bound by residues E408 and H503. Cystine bridges form between C606–C663, C704–C729, C750–C790, C776–C802, C808–C822, C816–C831, and C833–C846. A glycan (N-linked (GlcNAc...) asparagine) is linked at N623. The Sushi domain maps to 748-804 (DACGLPDSLDNGDVVLCGEAGRRVLVFSCRHGFKLQGPEQVACSPRGGAVRAPVCRD). An EGF-like; calcium-binding domain is found at 804–847 (DINECEDASHPPCHGSARCRNTKGGFRCECTDPAVLGEDGTTCV). A helical transmembrane segment spans residues 859 to 879 (SIALGIVLVVGLAGLTWTLVC). Topologically, residues 880-944 (RWAHAGRKAS…RSHVAQGSPA (65 aa)) are cytoplasmic. The segment at 895–944 (LGGRGAPPPGRGAGQDGASGSLVPPLGPQGRTRAVDPTSSRSHVAQGSPA) is disordered. Positions 931–944 (PTSSRSHVAQGSPA) are enriched in polar residues.

The protein belongs to the peroxidase family. XPO subfamily. As to quaternary structure, interacts with DUOX1, DUOX2 and CYBA. It depends on Ca(2+) as a cofactor. Heme b serves as cofactor. In terms of processing, heme is covalently bound through a H(2)O(2)-dependent autocatalytic process. Heme insertion is important for the delivery of protein at the cell surface. Post-translationally, cleaved in its N-terminal part.

It is found in the membrane. The enzyme catalyses 2 iodide + H2O2 + 2 H(+) = diiodine + 2 H2O. It catalyses the reaction [thyroglobulin]-L-tyrosine + iodide + H2O2 + H(+) = [thyroglobulin]-3-iodo-L-tyrosine + 2 H2O. It carries out the reaction [thyroglobulin]-3-iodo-L-tyrosine + iodide + H2O2 + H(+) = [thyroglobulin]-3,5-diiodo-L-tyrosine + 2 H2O. The catalysed reaction is 2 [thyroglobulin]-3,5-diiodo-L-tyrosine + H2O2 = [thyroglobulin]-L-thyroxine + [thyroglobulin]-dehydroalanine + 2 H2O. The enzyme catalyses [thyroglobulin]-3-iodo-L-tyrosine + [thyroglobulin]-3,5-diiodo-L-tyrosine + H2O2 = [thyroglobulin]-3,3',5-triiodo-L-thyronine + [thyroglobulin]-dehydroalanine + 2 H2O. It participates in hormone biosynthesis; thyroid hormone biosynthesis. Functionally, iodination and coupling of the hormonogenic tyrosines in thyroglobulin to yield the thyroid hormones T(3) and T(4). This chain is Thyroid peroxidase (TPO), found in Canis lupus familiaris (Dog).